The primary structure comprises 550 residues: Envelope glycoprotein E (550 aa).

The signal sequence occupies residues 1–23 (MELLAASRACIFFGLVTVLDAWG). Residues 24 to 408 (VQQVELSEGA…GAWTRHYLAF (385 aa)) lie on the Virion surface side of the membrane. A glycan (N-linked (GlcNAc...) asparagine; by host) is linked at Asn-47. The segment at 65 to 91 (CAGDISVKKVCVSHSLCEDNIIIGKHC) is interaction with gI. N-linked (GlcNAc...) asparagine; by host glycosylation is found at Asn-109, Asn-122, and Asn-241. 2 disulfide bridges follow: Cys-247/Cys-273 and Cys-256/Cys-265. The N-linked (GlcNAc...) asparagine; by host glycan is linked to Asn-291. A disulfide bridge links Cys-292 with Cys-303. The helical transmembrane segment at 409–425 (LLVIICTCAALLVALVV) threads the bilayer. The Intravirion portion of the chain corresponds to 426 to 550 (WGCILYIRSN…VASKLKSILK (125 aa)). An Internalization motif motif is present at residues 449–452 (YTSV). The acidic stretch occupies residues 468-482 (ASDSDDSFDSDSDEE). Positions 471 to 484 (SDDSFDSDSDEELE) are enriched in acidic residues. The disordered stretch occupies residues 471-513 (SDDSFDSDSDEELEYPPPPKPAPQLPPYQFVDGGDAPSGRSGF). The segment covering 485 to 496 (YPPPPKPAPQLP) has biased composition (pro residues).

Belongs to the alphaherpesvirinae glycoprotein E family. As to quaternary structure, interacts with gI. Phosphorylated on serines within the acidic cluster. Phosphorylation determines whether endocytosed viral gE traffics to the trans-Golgi network or recycles to the cell membrane.

The protein localises to the virion membrane. The protein resides in the host cell membrane. It is found in the host cell junction. It localises to the host Golgi apparatus membrane. Its subcellular location is the host endosome membrane. Its function is as follows. In epithelial cells, the heterodimer gE/gI is required for the cell-to-cell spread of the virus, by sorting nascent virions to cell junctions. Once the virus reaches the cell junctions, virus particles can spread to adjacent cells extremely rapidly through interactions with cellular receptors that accumulate at these junctions. Implicated in basolateral spread in polarized cells. In neuronal cells, gE/gI is essential for the anterograde spread of the infection throughout the host nervous system. Together with US9, the heterodimer gE/gI is involved in the sorting and transport of viral structural components toward axon tips. This chain is Envelope glycoprotein E (gE), found in Equus caballus (Horse).